A 185-amino-acid chain; its full sequence is N-alpha-acetyltransferase 30 (185 aa).

Residues 31–179 form the N-acetyltransferase domain; it reads IEYIPYQGES…DAVRLLLPLN (149 aa).

It belongs to the acetyltransferase family. MAK3 subfamily.

Functionally, probable catalytic component of a complex displaying alpha (N-terminal) acetyltransferase activity. This Dictyostelium discoideum (Social amoeba) protein is N-alpha-acetyltransferase 30.